The sequence spans 246 residues: Small ribosomal subunit protein uS2 (246 aa).

This sequence belongs to the universal ribosomal protein uS2 family. In terms of assembly, component of the small ribosomal subunit. Mature ribosomes consist of a small (40S) and a large (60S) subunit. The 40S subunit contains about 33 different proteins and 1 molecule of RNA (18S). The 60S subunit contains about 49 different proteins and 3 molecules of RNA (25S, 5.8S and 5S). Interacts with ribosomal protein S21.

Its subcellular location is the cytoplasm. In terms of biological role, required for the assembly and/or stability of the 40S ribosomal subunit. Required for the processing of the 20S rRNA-precursor to mature 18S rRNA in a late step of the maturation of 40S ribosomal subunits. The protein is Small ribosomal subunit protein uS2 of Leishmania infantum.